The sequence spans 434 residues: UDP-N-acetylglucosamine 1-carboxyvinyltransferase (434 aa).

Position 22–23 (22–23 (KN)) interacts with phosphoenolpyruvate. Residue Arg-99 participates in UDP-N-acetyl-alpha-D-glucosamine binding. Cys-123 (proton donor) is an active-site residue. Cys-123 is subject to 2-(S-cysteinyl)pyruvic acid O-phosphothioketal. UDP-N-acetyl-alpha-D-glucosamine-binding positions include 128–132 (RPVDQ), Asp-317, and Ile-339.

The protein belongs to the EPSP synthase family. MurA subfamily.

It localises to the cytoplasm. The catalysed reaction is phosphoenolpyruvate + UDP-N-acetyl-alpha-D-glucosamine = UDP-N-acetyl-3-O-(1-carboxyvinyl)-alpha-D-glucosamine + phosphate. It functions in the pathway cell wall biogenesis; peptidoglycan biosynthesis. In terms of biological role, cell wall formation. Adds enolpyruvyl to UDP-N-acetylglucosamine. The protein is UDP-N-acetylglucosamine 1-carboxyvinyltransferase of Paracidovorax citrulli (strain AAC00-1) (Acidovorax citrulli).